The sequence spans 307 residues: MISAKMVKDLREKTGAGMMDCKKALTECDGDLEKAVEVLREKGLAAAAKKSGRVAAEGIVSTYISEDMKNGSIIEFNCETDFVSVNELFVELANNLSKQAAFSNVSTAEELLEEKYIADESKLVKDVITELIAKLGENMNLRRIAKLSVDKGVITSYIHGGGRIGVIVKLACEKEDAKLAEIAKDVAMQVAATNPLFLNRDGVDTDTLEKEKEIYRVQALNEGKPEKVVEKMVMGRINKYYKENCLVEQLWVKNGDYTITKYLQEQSKEIGADITVEAFVRYEKGEGIEKKEEDFAEEVQRQMNQGK.

Residues 80–83 (TDFV) form an involved in Mg(2+) ion dislocation from EF-Tu region.

This sequence belongs to the EF-Ts family.

The protein resides in the cytoplasm. In terms of biological role, associates with the EF-Tu.GDP complex and induces the exchange of GDP to GTP. It remains bound to the aminoacyl-tRNA.EF-Tu.GTP complex up to the GTP hydrolysis stage on the ribosome. This is Elongation factor Ts from Clostridium botulinum (strain 657 / Type Ba4).